The sequence spans 187 residues: Benzene 1,2-dioxygenase subunit beta (187 aa).

It belongs to the bacterial ring-hydroxylating dioxygenase beta subunit family. In terms of assembly, this dioxygenase system consists of four proteins: the two subunits of the hydroxylase component (BedC1 and BedC2), a ferredoxin (BedB) and a ferredoxin reductase (BedA).

It carries out the reaction benzene + NADH + O2 + H(+) = cis-1,2-dihydrobenzene-1,2-diol + NAD(+). It functions in the pathway aromatic compound metabolism; benzene degradation; catechol from benzene: step 1/2. Its function is as follows. The beta subunit may be responsible for the substrate specificity of the enzyme. The protein is Benzene 1,2-dioxygenase subunit beta (bedC2) of Pseudomonas putida (Arthrobacter siderocapsulatus).